The sequence spans 719 residues: DNA ligase (719 aa).

NAD(+)-binding positions include 42-46, 92-93, and E126; these read DAAYD and SL. The N6-AMP-lysine intermediate role is filled by K128. 4 residues coordinate NAD(+): R149, E185, K301, and K325. 4 residues coordinate Zn(2+): C430, C433, C448, and C454. The region spanning 640-719 is the BRCT domain; that stretch reads ATGSPVEGKT…DDWFKLVGED (80 aa).

The protein belongs to the NAD-dependent DNA ligase family. LigA subfamily. The cofactor is Mg(2+). It depends on Mn(2+) as a cofactor.

The enzyme catalyses NAD(+) + (deoxyribonucleotide)n-3'-hydroxyl + 5'-phospho-(deoxyribonucleotide)m = (deoxyribonucleotide)n+m + AMP + beta-nicotinamide D-nucleotide.. Functionally, DNA ligase that catalyzes the formation of phosphodiester linkages between 5'-phosphoryl and 3'-hydroxyl groups in double-stranded DNA using NAD as a coenzyme and as the energy source for the reaction. It is essential for DNA replication and repair of damaged DNA. This Brucella ovis (strain ATCC 25840 / 63/290 / NCTC 10512) protein is DNA ligase.